The sequence spans 156 residues: Small ribosomal subunit protein uS7 (156 aa).

Belongs to the universal ribosomal protein uS7 family. Part of the 30S ribosomal subunit. Contacts proteins S9 and S11.

In terms of biological role, one of the primary rRNA binding proteins, it binds directly to 16S rRNA where it nucleates assembly of the head domain of the 30S subunit. Is located at the subunit interface close to the decoding center, probably blocks exit of the E-site tRNA. This chain is Small ribosomal subunit protein uS7, found in Geobacter sp. (strain M21).